Here is a 486-residue protein sequence, read N- to C-terminus: Ammonium transporter 2 member 1 (486 aa).

A run of 11 helical transmembrane segments spans residues 29-49, 57-77, 127-147, 161-181, 190-210, 225-245, 252-272, 285-305, 309-329, 343-363, and 399-419; these read ASTLVGIQSMPGLVVLYGSIV, SAFMALYAYASSLLVWVLVGF, LVLFQFEFAAITLVLLAGSVL, LWLLLSYTVGAFSLWGGGFLY, GGYVIHLSSGIAGFTAAYWVG, ILLMIAGGGLLWMGWAGFNGG, IAASVAVLNTNVCAATSLLMW, VIGAVQGMMTGLVCITPGAGL, WAAVVMGIFAGSVPWFTMMIL, LAVFHTHAVAGLLGGILTGLL, and FVIAWNLVVTTAILLGIGLFI. The span at 454–470 shows a compositional bias: basic and acidic residues; it reads RHDLSRGGGGGDRDGPA. The segment at 454-473 is disordered; it reads RHDLSRGGGGGDRDGPAGER.

The protein belongs to the ammonia transporter channel (TC 1.A.11.2) family. In terms of tissue distribution, expressed in roots and leaf blades and sheaths.

It is found in the cell membrane. Involved in ammonium transport. In Oryza sativa subsp. japonica (Rice), this protein is Ammonium transporter 2 member 1 (AMT2-1).